Reading from the N-terminus, the 210-residue chain is Two-component response regulator ORR7 (210 aa).

Residues 53 to 92 (VVPLHDNASAEDDDDDEEDDDEDDDDDDDEDDEEEAAPPY) form a disordered region. The segment covering 61-88 (SAEDDDDDEEDDDEDDDDDDDEDDEEEA) has biased composition (acidic residues). The region spanning 92-205 (YVMAVDDSSV…VRPADISRIT (114 aa)) is the Response regulatory domain. At Asp142 the chain carries 4-aspartylphosphate.

It belongs to the ARR family. Type-A subfamily. Post-translationally, two-component system major event consists of a His-to-Asp phosphorelay between a sensor histidine kinase (HK) and a response regulator (RR). In plants, the His-to-Asp phosphorelay involves an additional intermediate named Histidine-containing phosphotransfer protein (HPt). This multistep phosphorelay consists of a His-Asp-His-Asp sequential transfer of a phosphate group between first a His and an Asp of the HK protein, followed by the transfer to a conserved His of the HPt protein and finally the transfer to an Asp in the receiver domain of the RR protein.

In terms of biological role, functions as a response regulator involved in His-to-Asp phosphorelay signal transduction system. Phosphorylation of the Asp residue in the receiver domain activates the ability of the protein to promote the transcription of target genes. Type-A response regulators seem to act as negative regulators of the cytokinin signaling. The protein is Two-component response regulator ORR7 of Oryza sativa subsp. japonica (Rice).